Reading from the N-terminus, the 136-residue chain is Urease subunit beta (136 aa).

It belongs to the urease beta subunit family. As to quaternary structure, heterotrimer of UreA (gamma), UreB (beta) and UreC (alpha) subunits. Three heterotrimers associate to form the active enzyme.

It localises to the cytoplasm. It catalyses the reaction urea + 2 H2O + H(+) = hydrogencarbonate + 2 NH4(+). The protein operates within nitrogen metabolism; urea degradation; CO(2) and NH(3) from urea (urease route): step 1/1. This chain is Urease subunit beta, found in Staphylococcus aureus (strain Mu3 / ATCC 700698).